The primary structure comprises 473 residues: Photosystem II CP43 reaction center protein (473 aa).

Positions 1–14 (MKTLYSLRRFYPVE) are excised as a propeptide. Thr-15 carries the post-translational modification N-acetylthreonine. Thr-15 carries the phosphothreonine modification. 5 helical membrane-spanning segments follow: residues 69–93 (LFEV…PHLA), 134–155 (LLGP…KDRN), 178–200 (KALY…RKIT), 255–275 (KPFA…LSYS), and 291–312 (WFNN…ASQA). Position 367 (Glu-367) interacts with [CaMn4O5] cluster. Residues 447–471 (RARAAAAGFEKGIDRDFEPVLSMTP) traverse the membrane as a helical segment.

This sequence belongs to the PsbB/PsbC family. PsbC subfamily. As to quaternary structure, PSII is composed of 1 copy each of membrane proteins PsbA, PsbB, PsbC, PsbD, PsbE, PsbF, PsbH, PsbI, PsbJ, PsbK, PsbL, PsbM, PsbT, PsbX, PsbY, PsbZ, Psb30/Ycf12, at least 3 peripheral proteins of the oxygen-evolving complex and a large number of cofactors. It forms dimeric complexes. Requires Binds multiple chlorophylls and provides some of the ligands for the Ca-4Mn-5O cluster of the oxygen-evolving complex. It may also provide a ligand for a Cl- that is required for oxygen evolution. PSII binds additional chlorophylls, carotenoids and specific lipids. as cofactor.

Its subcellular location is the plastid. It is found in the chloroplast thylakoid membrane. In terms of biological role, one of the components of the core complex of photosystem II (PSII). It binds chlorophyll and helps catalyze the primary light-induced photochemical processes of PSII. PSII is a light-driven water:plastoquinone oxidoreductase, using light energy to abstract electrons from H(2)O, generating O(2) and a proton gradient subsequently used for ATP formation. The polypeptide is Photosystem II CP43 reaction center protein (Calycanthus floridus var. glaucus (Eastern sweetshrub)).